The sequence spans 791 residues: Outer membrane protein assembly factor BamA (791 aa).

5 POTRA domains span residues 59-130 (NAIA…VTEK), 131-209 (PRID…VEEG), 212-298 (LYIK…VKEG), 301-383 (YKLG…IRKR), and 386-459 (VYIN…VKEQ).

It belongs to the BamA family. Part of the Bam complex.

The protein localises to the cell outer membrane. Part of the outer membrane protein assembly complex, which is involved in assembly and insertion of beta-barrel proteins into the outer membrane. The chain is Outer membrane protein assembly factor BamA from Nitratidesulfovibrio vulgaris (strain ATCC 29579 / DSM 644 / CCUG 34227 / NCIMB 8303 / VKM B-1760 / Hildenborough) (Desulfovibrio vulgaris).